The primary structure comprises 145 residues: Cell wall teichoic acid glycosylation protein GtcA (145 aa).

A run of 4 helical transmembrane segments spans residues 21–41 (IFMYLIMGGFTTIINIVTFWL), 45–65 (ILNWDYRIANTIAFIASVLFA), 91–111 (FFGFRCLTYIIDILVMILLIS), and 122–142 (IWTNIIVLVLNYVFSKWIIFK).

It belongs to the GtrA family.

The protein resides in the cell membrane. Functionally, involved in the decoration of cell wall teichoic acid with galactose and glucose. This Listeria monocytogenes protein is Cell wall teichoic acid glycosylation protein GtcA (gtcA).